We begin with the raw amino-acid sequence, 165 residues long: Cyanate hydratase (165 aa).

Residues arginine 106, glutamate 109, and serine 132 contribute to the active site.

The protein belongs to the cyanase family.

The catalysed reaction is cyanate + hydrogencarbonate + 3 H(+) = NH4(+) + 2 CO2. Functionally, catalyzes the reaction of cyanate with bicarbonate to produce ammonia and carbon dioxide. This chain is Cyanate hydratase, found in Laccaria bicolor (strain S238N-H82 / ATCC MYA-4686) (Bicoloured deceiver).